Here is a 198-residue protein sequence, read N- to C-terminus: Sulfite reductase, dissimilatory-type subunit alpha (198 aa).

Residues Cys-45, Cys-64, Cys-67, and Cys-70 each contribute to the [4Fe-4S] cluster site. A 4Fe-4S ferredoxin-type domain is found at 55 to 83 (GTLSIDNKNCTRCMHCINTMPRALKIGDE).

Heterohexamer of two alpha, two beta and two gamma subunits.

Functionally, part of the complex that catalyzes the reduction of sulfite to sulfide. The alpha and beta subunits may have arisen by gene duplication. They both bind 2 iron-sulfur clusters, but the alpha subunit seems to be catalytically inactive, due to substitutions along the putative substrate access channel, and because it binds sirohydrochlorin (the dematallated form of siroheme) instead of siroheme. This Megalodesulfovibrio gigas (strain ATCC 19364 / DSM 1382 / NCIMB 9332 / VKM B-1759) (Desulfovibrio gigas) protein is Sulfite reductase, dissimilatory-type subunit alpha (dsrA).